We begin with the raw amino-acid sequence, 64 residues long: Large ribosomal subunit protein bL35 (64 aa).

It belongs to the bacterial ribosomal protein bL35 family.

The chain is Large ribosomal subunit protein bL35 from Alcanivorax borkumensis (strain ATCC 700651 / DSM 11573 / NCIMB 13689 / SK2).